The primary structure comprises 190 residues: Protein GrpE (190 aa).

The interval M1–E42 is disordered. Acidic residues predominate over residues E26 to E42.

It belongs to the GrpE family. Homodimer.

The protein resides in the cytoplasm. Functionally, participates actively in the response to hyperosmotic and heat shock by preventing the aggregation of stress-denatured proteins, in association with DnaK and GrpE. It is the nucleotide exchange factor for DnaK and may function as a thermosensor. Unfolded proteins bind initially to DnaJ; upon interaction with the DnaJ-bound protein, DnaK hydrolyzes its bound ATP, resulting in the formation of a stable complex. GrpE releases ADP from DnaK; ATP binding to DnaK triggers the release of the substrate protein, thus completing the reaction cycle. Several rounds of ATP-dependent interactions between DnaJ, DnaK and GrpE are required for fully efficient folding. The sequence is that of Protein GrpE from Oceanobacillus iheyensis (strain DSM 14371 / CIP 107618 / JCM 11309 / KCTC 3954 / HTE831).